A 305-amino-acid polypeptide reads, in one-letter code: Ribosomal RNA small subunit methyltransferase H (305 aa).

Residues 30-32, Asp49, Phe74, Asp96, and Gln103 each bind S-adenosyl-L-methionine; that span reads GGH.

The protein belongs to the methyltransferase superfamily. RsmH family.

The protein localises to the cytoplasm. The catalysed reaction is cytidine(1402) in 16S rRNA + S-adenosyl-L-methionine = N(4)-methylcytidine(1402) in 16S rRNA + S-adenosyl-L-homocysteine + H(+). Its function is as follows. Specifically methylates the N4 position of cytidine in position 1402 (C1402) of 16S rRNA. In Francisella tularensis subsp. mediasiatica (strain FSC147), this protein is Ribosomal RNA small subunit methyltransferase H.